A 398-amino-acid polypeptide reads, in one-letter code: 1-deoxy-D-xylulose 5-phosphate reductoisomerase (398 aa).

NADPH-binding residues include Thr10, Gly11, Ser12, Ile13, Gly36, Lys37, Asn38, and Asn124. Lys125 is a 1-deoxy-D-xylulose 5-phosphate binding site. Position 126 (Glu126) interacts with NADPH. Asp150 serves as a coordination point for Mn(2+). Positions 151, 152, 186, and 209 each coordinate 1-deoxy-D-xylulose 5-phosphate. Glu152 provides a ligand contact to Mn(2+). Gly215 contributes to the NADPH binding site. 1-deoxy-D-xylulose 5-phosphate contacts are provided by Ser222, Asn227, Lys228, and Glu231. Glu231 provides a ligand contact to Mn(2+).

The protein belongs to the DXR family. As to quaternary structure, homodimer. Mg(2+) is required as a cofactor. Mn(2+) serves as cofactor. It depends on Co(2+) as a cofactor.

It catalyses the reaction 2-C-methyl-D-erythritol 4-phosphate + NADP(+) = 1-deoxy-D-xylulose 5-phosphate + NADPH + H(+). Its pathway is isoprenoid biosynthesis; isopentenyl diphosphate biosynthesis via DXP pathway; isopentenyl diphosphate from 1-deoxy-D-xylulose 5-phosphate: step 1/6. Inhibited by fosmidomycin. Catalyzes the NADPH-dependent rearrangement and reduction of 1-deoxy-D-xylulose-5-phosphate (DXP) to 2-C-methyl-D-erythritol 4-phosphate (MEP). This Escherichia coli (strain K12) protein is 1-deoxy-D-xylulose 5-phosphate reductoisomerase (dxr).